We begin with the raw amino-acid sequence, 225 residues long: Holliday junction branch migration complex subunit RuvA (225 aa).

The domain I stretch occupies residues 1–68 (MIGWLQGQKV…DDGSSLFGFP (68 aa)). The domain II stretch occupies residues 69–147 (ERRERDMFRT…EFSCRDPGMS (79 aa)). The flexible linker stretch occupies residues 148–158 (LVDNGVIDSHQ). A domain III region spans residues 159–225 (LKDSSLHELQ…SLRWLSQEAA (67 aa)).

This sequence belongs to the RuvA family. As to quaternary structure, homotetramer. Forms an RuvA(8)-RuvB(12)-Holliday junction (HJ) complex. HJ DNA is sandwiched between 2 RuvA tetramers; dsDNA enters through RuvA and exits via RuvB. An RuvB hexamer assembles on each DNA strand where it exits the tetramer. Each RuvB hexamer is contacted by two RuvA subunits (via domain III) on 2 adjacent RuvB subunits; this complex drives branch migration. In the full resolvosome a probable DNA-RuvA(4)-RuvB(12)-RuvC(2) complex forms which resolves the HJ.

The protein localises to the cytoplasm. Functionally, the RuvA-RuvB-RuvC complex processes Holliday junction (HJ) DNA during genetic recombination and DNA repair, while the RuvA-RuvB complex plays an important role in the rescue of blocked DNA replication forks via replication fork reversal (RFR). RuvA specifically binds to HJ cruciform DNA, conferring on it an open structure. The RuvB hexamer acts as an ATP-dependent pump, pulling dsDNA into and through the RuvAB complex. HJ branch migration allows RuvC to scan DNA until it finds its consensus sequence, where it cleaves and resolves the cruciform DNA. The polypeptide is Holliday junction branch migration complex subunit RuvA (Prochlorococcus marinus (strain MIT 9313)).